Here is a 316-residue protein sequence, read N- to C-terminus: Probable cell division protein WhiA (316 aa).

The H-T-H motif DNA-binding region spans 275–309 (TLKELGEMVSGGKISKSGINHRLRKIDDIAEKLRA).

This sequence belongs to the WhiA family.

Involved in cell division and chromosome segregation. The protein is Probable cell division protein WhiA of Bacillus anthracis (strain CDC 684 / NRRL 3495).